Here is a 574-residue protein sequence, read N- to C-terminus: ATP-dependent RNA helicase RhlB (574 aa).

A Q motif motif is present at residues Val9–Ala37. Residues Leu40 to Leu220 enclose the Helicase ATP-binding domain. Residue Ala53–Thr60 coordinates ATP. The DEAD box motif lies at Asp166–Asp169. A Helicase C-terminal domain is found at Arg231–Leu393. Basic and acidic residues predominate over residues Glu423–Arg432. The interval Glu423 to Asn574 is disordered. Positions Gly435–Gly449 are enriched in gly residues. Low complexity predominate over residues Ala477–Pro495. The segment covering Pro506 to Gly515 has biased composition (basic residues). Low complexity-rich tracts occupy residues Pro523–Ala535 and Ser553–Arg562.

This sequence belongs to the DEAD box helicase family. RhlB subfamily. Component of the RNA degradosome, which is a multiprotein complex involved in RNA processing and mRNA degradation.

It is found in the cytoplasm. The catalysed reaction is ATP + H2O = ADP + phosphate + H(+). DEAD-box RNA helicase involved in RNA degradation. Has RNA-dependent ATPase activity and unwinds double-stranded RNA. This Xanthomonas oryzae pv. oryzae (strain KACC10331 / KXO85) protein is ATP-dependent RNA helicase RhlB.